The following is a 528-amino-acid chain: Glucose-6-phosphate isomerase (528 aa).

E322 functions as the Proton donor in the catalytic mechanism. Catalysis depends on residues H351 and K455.

Belongs to the GPI family.

The protein resides in the cytoplasm. It catalyses the reaction alpha-D-glucose 6-phosphate = beta-D-fructose 6-phosphate. Its pathway is carbohydrate biosynthesis; gluconeogenesis. It functions in the pathway carbohydrate degradation; glycolysis; D-glyceraldehyde 3-phosphate and glycerone phosphate from D-glucose: step 2/4. In terms of biological role, catalyzes the reversible isomerization of glucose-6-phosphate to fructose-6-phosphate. The sequence is that of Glucose-6-phosphate isomerase from Synechococcus elongatus (strain ATCC 33912 / PCC 7942 / FACHB-805) (Anacystis nidulans R2).